A 647-amino-acid chain; its full sequence is LIM domain kinase 1 (647 aa).

LIM zinc-binding domains are found at residues 25-75 (CASC…CKKD) and 84-137 (CHGC…CGQC). The PDZ domain occupies 165–258 (LVSIPASAHG…LLQLTLEHDP (94 aa)). Serine 210 is subject to Phosphoserine. Residue threonine 229 is modified to Phosphothreonine. Residues 256–319 (HDPHDSLGHG…SPASQRKDLG (64 aa)) are disordered. The span at 266–277 (PVSDPSPLSSPV) shows a compositional bias: low complexity. Polar residues-rich tracts occupy residues 278-289 (HTPSGQAASSAR) and 298-313 (SIDT…SPAS). Residues serine 298, serine 302, serine 307, and serine 310 each carry the phosphoserine modification. Serine 323 is subject to Phosphoserine; by MAPKAPK2. Position 337 is a phosphoserine (serine 337). The 266-residue stretch at 339 to 604 (LIHGEVLGKG…PSFVKLEQWL (266 aa)) folds into the Protein kinase domain. Residues 345 to 353 (LGKGCFGQA) and lysine 368 contribute to the ATP site. Residue aspartate 460 is part of the active site. Threonine 508 is subject to Phosphothreonine; by ROCK1.

Belongs to the protein kinase superfamily. TKL Ser/Thr protein kinase family. As to quaternary structure, self-associates to form homodimers. Interacts with HSP90AA1; this interaction promotes LIMK1 dimerization and subsequent transphosphorylation. Interacts with CDKN1C. Interacts (via LIM domain) with the cytoplasmic domain of NRG1. Interacts with NISCH. Interacts with SSH1. Interacts with RLIM and RNF6. Interacts (via LIM zinc-binding domains) with FAM89B/LRAP25 (via LRR repeat). Forms a tripartite complex with CDC42BPA, CDC42BPB and FAM89B/LRAP25. Autophosphorylated. Phosphorylated on Thr-508 by ROCK1 and PAK1, resulting in activation. Phosphorylated by PAK4 which increases the ability of LIMK1 to phosphorylate cofilin. Phosphorylated at Ser-323 by MAPKAPK2 during activation of VEGFA-induced signaling, which results in activation of LIMK1 and promotion of actin reorganization, cell migration, and tubule formation of endothelial cells. Dephosphorylated and inactivated by SSH1. Phosphorylated by CDC42BP. Post-translationally, ubiquitinated. 'Lys-48'-linked polyubiquitination by RNF6 leads to proteasomal degradation through the 26S proteasome, modulating LIMK1 levels in the growth cone and its effect on axonal outgrowth. Also polyubiquitinated by RLIM. Highest expression in the nervous system, particularly in the spinal cord and the cranial nerve and dorsal root ganglia.

The protein resides in the cytoplasm. It is found in the nucleus. Its subcellular location is the cytoskeleton. It localises to the cell projection. The protein localises to the lamellipodium. It carries out the reaction L-seryl-[protein] + ATP = O-phospho-L-seryl-[protein] + ADP + H(+). It catalyses the reaction L-threonyl-[protein] + ATP = O-phospho-L-threonyl-[protein] + ADP + H(+). Its function is as follows. Serine/threonine-protein kinase that plays an essential role in the regulation of actin filament dynamics. Acts downstream of several Rho family GTPase signal transduction pathways. Activated by upstream kinases including ROCK1, PAK1 and PAK4, which phosphorylate LIMK1 on a threonine residue located in its activation loop. LIMK1 subsequently phosphorylates and inactivates the actin binding/depolymerizing factors cofilin-1/CFL1, cofilin-2/CFL2 and destrin/DSTN, thereby preventing the cleavage of filamentous actin (F-actin), and stabilizing the actin cytoskeleton. In this way LIMK1 regulates several actin-dependent biological processes including cell motility, cell cycle progression, and differentiation. Phosphorylates TPPP on serine residues, thereby promoting microtubule disassembly. Stimulates axonal outgrowth and may be involved in brain development. This is LIM domain kinase 1 (Limk1) from Mus musculus (Mouse).